A 184-amino-acid polypeptide reads, in one-letter code: GTP cyclohydrolase 1 (184 aa).

3 residues coordinate Zn(2+): C75, H78, and C146.

The protein belongs to the GTP cyclohydrolase I family. As to quaternary structure, toroid-shaped homodecamer, composed of two pentamers of five dimers.

The catalysed reaction is GTP + H2O = 7,8-dihydroneopterin 3'-triphosphate + formate + H(+). It participates in cofactor biosynthesis; 7,8-dihydroneopterin triphosphate biosynthesis; 7,8-dihydroneopterin triphosphate from GTP: step 1/1. The sequence is that of GTP cyclohydrolase 1 from Streptococcus pneumoniae serotype 2 (strain D39 / NCTC 7466).